Consider the following 287-residue polypeptide: 3-alpha-hydroxysteroid sulfotransferase (287 aa).

44 to 49 (KSGTNW) contacts 3'-phosphoadenylyl sulfate. 2 residues coordinate substrate: W72 and W77. The active-site Proton acceptor is H99. 3'-phosphoadenylyl sulfate is bound by residues R121, S129, Y184, 218–223 (SSFQFM), and 247–249 (RKG).

The protein belongs to the sulfotransferase 1 family. In terms of assembly, homodimer. As to expression, adrenal gland and liver.

Its subcellular location is the cytoplasm. It carries out the reaction an alcohol + 3'-phosphoadenylyl sulfate = an alkyl sulfate + adenosine 3',5'-bisphosphate + H(+). Sulfotransferase that utilizes 3'-phospho-5'-adenylyl sulfate (PAPS) as sulfonate donor to catalyze the sulfonation of 3-alpha-hydroxyl groups of neutral steroids. This Cavia porcellus (Guinea pig) protein is 3-alpha-hydroxysteroid sulfotransferase (STD1).